Consider the following 380-residue polypeptide: Serpin B7 (380 aa).

A phosphoserine mark is found at serine 217 and serine 223.

Belongs to the serpin family. Ov-serpin subfamily. Predominantly expressed in mesangial cells. Expressed in the epidermis of the whole body.

The protein resides in the cytoplasm. Might function as an inhibitor of Lys-specific proteases. Might influence the maturation of megakaryocytes via its action as a serpin. This Homo sapiens (Human) protein is Serpin B7 (SERPINB7).